The sequence spans 455 residues: Bifunctional protein GlmU (455 aa).

The segment at 1–226 (MSLEIVILAA…AMEVQGANDR (226 aa)) is pyrophosphorylase. UDP-N-acetyl-alpha-D-glucosamine is bound by residues 8 to 11 (LAAG), K22, Q73, 78 to 79 (GT), 99 to 101 (YGD), G136, E151, N166, and N224. D101 is a binding site for Mg(2+). N224 is a Mg(2+) binding site. The linker stretch occupies residues 227–247 (KQLAELERHYQLRAGRRLMAQ). Residues 248–455 (GVTLRDPARF…WKRPEKIKKD (208 aa)) are N-acetyltransferase. R330 and K348 together coordinate UDP-N-acetyl-alpha-D-glucosamine. H360 acts as the Proton acceptor in catalysis. UDP-N-acetyl-alpha-D-glucosamine is bound by residues Y363 and N374. Residues A377, 383–384 (NY), S402, A420, and R437 contribute to the acetyl-CoA site.

In the N-terminal section; belongs to the N-acetylglucosamine-1-phosphate uridyltransferase family. This sequence in the C-terminal section; belongs to the transferase hexapeptide repeat family. Homotrimer. It depends on Mg(2+) as a cofactor.

The protein resides in the cytoplasm. The catalysed reaction is alpha-D-glucosamine 1-phosphate + acetyl-CoA = N-acetyl-alpha-D-glucosamine 1-phosphate + CoA + H(+). The enzyme catalyses N-acetyl-alpha-D-glucosamine 1-phosphate + UTP + H(+) = UDP-N-acetyl-alpha-D-glucosamine + diphosphate. Its pathway is nucleotide-sugar biosynthesis; UDP-N-acetyl-alpha-D-glucosamine biosynthesis; N-acetyl-alpha-D-glucosamine 1-phosphate from alpha-D-glucosamine 6-phosphate (route II): step 2/2. The protein operates within nucleotide-sugar biosynthesis; UDP-N-acetyl-alpha-D-glucosamine biosynthesis; UDP-N-acetyl-alpha-D-glucosamine from N-acetyl-alpha-D-glucosamine 1-phosphate: step 1/1. It functions in the pathway bacterial outer membrane biogenesis; LPS lipid A biosynthesis. In terms of biological role, catalyzes the last two sequential reactions in the de novo biosynthetic pathway for UDP-N-acetylglucosamine (UDP-GlcNAc). The C-terminal domain catalyzes the transfer of acetyl group from acetyl coenzyme A to glucosamine-1-phosphate (GlcN-1-P) to produce N-acetylglucosamine-1-phosphate (GlcNAc-1-P), which is converted into UDP-GlcNAc by the transfer of uridine 5-monophosphate (from uridine 5-triphosphate), a reaction catalyzed by the N-terminal domain. This is Bifunctional protein GlmU from Pseudomonas fluorescens (strain ATCC BAA-477 / NRRL B-23932 / Pf-5).